The following is a 338-amino-acid chain: Ketol-acid reductoisomerase (NADP(+)) (338 aa).

Positions 1 to 181 constitute a KARI N-terminal Rossmann domain; sequence MKVFYDKDCD…GGGRAGIIET (181 aa). NADP(+) is bound by residues 24–27, Arg47, and Ser52; that span reads YGSQ. Residue His107 is part of the active site. Gly133 contacts NADP(+). One can recognise a KARI C-terminal knotted domain in the interval 182–327; it reads NFREETETDL…GKLRAMMPWI (146 aa). Mg(2+) is bound by residues Asp190, Glu194, Glu226, and Glu230. Ser251 provides a ligand contact to substrate.

This sequence belongs to the ketol-acid reductoisomerase family. Mg(2+) is required as a cofactor.

The enzyme catalyses (2R)-2,3-dihydroxy-3-methylbutanoate + NADP(+) = (2S)-2-acetolactate + NADPH + H(+). The catalysed reaction is (2R,3R)-2,3-dihydroxy-3-methylpentanoate + NADP(+) = (S)-2-ethyl-2-hydroxy-3-oxobutanoate + NADPH + H(+). It functions in the pathway amino-acid biosynthesis; L-isoleucine biosynthesis; L-isoleucine from 2-oxobutanoate: step 2/4. Its pathway is amino-acid biosynthesis; L-valine biosynthesis; L-valine from pyruvate: step 2/4. Its function is as follows. Involved in the biosynthesis of branched-chain amino acids (BCAA). Catalyzes an alkyl-migration followed by a ketol-acid reduction of (S)-2-acetolactate (S2AL) to yield (R)-2,3-dihydroxy-isovalerate. In the isomerase reaction, S2AL is rearranged via a Mg-dependent methyl migration to produce 3-hydroxy-3-methyl-2-ketobutyrate (HMKB). In the reductase reaction, this 2-ketoacid undergoes a metal-dependent reduction by NADPH to yield (R)-2,3-dihydroxy-isovalerate. This is Ketol-acid reductoisomerase (NADP(+)) from Bordetella pertussis (strain Tohama I / ATCC BAA-589 / NCTC 13251).